A 592-amino-acid polypeptide reads, in one-letter code: Threonine dehydratase biosynthetic, chloroplastic (592 aa).

The N-terminal 91 residues, 1-91, are a transit peptide targeting the chloroplast; sequence MNSVQLPTAQ…NEAENGSIAE (91 aa). Residue Lys141 is modified to N6-(pyridoxal phosphate)lysine. ACT-like domains are found at residues 419–490 and 512–583; these read AVLA…NLTT and VLCR…LVSD.

Belongs to the serine/threonine dehydratase family. It depends on pyridoxal 5'-phosphate as a cofactor.

It is found in the plastid. The protein localises to the chloroplast. It catalyses the reaction L-threonine = 2-oxobutanoate + NH4(+). It participates in amino-acid biosynthesis; L-isoleucine biosynthesis; 2-oxobutanoate from L-threonine: step 1/1. Allosterically inhibited by isoleucine. Strain GM11b is isoleucine feedback insensitive and is resistant to the antimetabolite L-O-methylthreonine. Its function is as follows. Catalyzes the formation of alpha-ketobutyrate from threonine in a two-step reaction. The first step is a dehydration of threonine, followed by rehydration and liberation of ammonia. The sequence is that of Threonine dehydratase biosynthetic, chloroplastic (OMR1) from Arabidopsis thaliana (Mouse-ear cress).